An 82-amino-acid polypeptide reads, in one-letter code: Small ribosomal subunit protein eS21 (82 aa).

This sequence belongs to the eukaryotic ribosomal protein eS21 family.

This is Small ribosomal subunit protein eS21 (RPS21) from Cyanophora paradoxa.